Reading from the N-terminus, the 119-residue chain is Large ribosomal subunit protein bL20 (119 aa).

It belongs to the bacterial ribosomal protein bL20 family.

In terms of biological role, binds directly to 23S ribosomal RNA and is necessary for the in vitro assembly process of the 50S ribosomal subunit. It is not involved in the protein synthesizing functions of that subunit. The protein is Large ribosomal subunit protein bL20 of Vesicomyosocius okutanii subsp. Calyptogena okutanii (strain HA).